The following is a 296-amino-acid chain: Probable endonuclease 4 (296 aa).

Positions 69, 109, 160, 194, 197, 231, 244, 246, and 276 each coordinate Zn(2+).

It belongs to the AP endonuclease 2 family. Zn(2+) is required as a cofactor.

The catalysed reaction is Endonucleolytic cleavage to 5'-phosphooligonucleotide end-products.. Functionally, endonuclease IV plays a role in DNA repair. It cleaves phosphodiester bonds at apurinic or apyrimidinic (AP) sites, generating a 3'-hydroxyl group and a 5'-terminal sugar phosphate. In Sulfurovum sp. (strain NBC37-1), this protein is Probable endonuclease 4.